The following is a 679-amino-acid chain: MNFYSAYQHGFVRVAACTHHTTIGDPAANAASVLDMARACHDDGAALAVFPELTLSGYSIEDVLLQDSLLDAVEDALLDLVTESADLLPVLVVGAPLRHRHRIYNTAVVIHRGAVLGVVPKSYLPTYREFYERRQMAPGDGERGTIRIGGADVAFGTDLLFAASDLPGFVLHVEICEDMFVPMPPSAEAALAGATVLANLSGSPITIGRAEDRRLLARSASARCLAAYVYAAAGEGESTTDLAWDGQTMIWENGALLAESERFPKGVRRSVADVDTELLRSERLRMGTFDDNRRHHRELTESFRRIDFALDPPAGDIGLLREVERFPFVPADPQRLQQDCYEAYNIQVSGLEQRLRALDYPKVVIGVSGGLDSTHALIVATHAMDREGRPRSDILAFALPGFATGEHTKNNAIKLARALGVTFSEIDIGDTARLMLHTIGHPYSVGEKVYDVTFENVQAGLRTDYLFRIANQRGGIVLGTGDLSELALGWSTYGVGDQMSHYNVNAGVPKTLIQHLIRWVISAGEFGEKVGEVLQSVLDTEITPELIPTGEEELQSSEAKVGPFALQDFSLFQVLRYGFRPSKIAFLAWHAWNDAERGNWPPGFPKSERPSYSLAEIRHWLQIFVQRFYSFSQFKRSALPNGPKVSHGGALSPRGDWRAPSDMSARIWLDQIDREVPKG.

Residues 12–276 (VRVAACTHHT…VRRSVADVDT (265 aa)) enclose the CN hydrolase domain. The Proton acceptor; for glutaminase activity role is filled by glutamate 52. The For glutaminase activity role is filled by lysine 121. Tyrosine 127 is a binding site for L-glutamine. Cysteine 176 functions as the Nucleophile; for glutaminase activity in the catalytic mechanism. Residues serine 203 and arginine 209 each contribute to the L-glutamine site. Residues 337 to 679 (QQDCYEAYNI…DQIDREVPKG (343 aa)) form a ligase region. Position 366-373 (366-373 (GVSGGLDS)) interacts with ATP. Asparagine 456 lines the deamido-NAD(+) pocket. Threonine 480 contacts ATP. Deamido-NAD(+) contacts are provided by residues glutamate 485, 490 to 493 (WSTY), and lysine 635. The disordered stretch occupies residues 639–658 (LPNGPKVSHGGALSPRGDWR).

It in the C-terminal section; belongs to the NAD synthetase family.

It carries out the reaction deamido-NAD(+) + L-glutamine + ATP + H2O = L-glutamate + AMP + diphosphate + NAD(+) + H(+). It functions in the pathway cofactor biosynthesis; NAD(+) biosynthesis; NAD(+) from deamido-NAD(+) (L-Gln route): step 1/1. Functionally, catalyzes the ATP-dependent amidation of deamido-NAD to form NAD. Uses L-glutamine as a nitrogen source. In Mycobacterium bovis (strain ATCC BAA-935 / AF2122/97), this protein is Glutamine-dependent NAD(+) synthetase.